The primary structure comprises 326 residues: NAD kinase (326 aa).

D93 acts as the Proton acceptor in catalysis. NAD(+)-binding positions include 93–94 (DG), R98, 171–172 (NE), R182, D201, and 212–217 (TAHAFS).

The protein belongs to the NAD kinase family. A divalent metal cation is required as a cofactor.

It localises to the cytoplasm. The catalysed reaction is NAD(+) + ATP = ADP + NADP(+) + H(+). In terms of biological role, involved in the regulation of the intracellular balance of NAD and NADP, and is a key enzyme in the biosynthesis of NADP. Catalyzes specifically the phosphorylation on 2'-hydroxyl of the adenosine moiety of NAD to yield NADP. The chain is NAD kinase from Thermobifida fusca (strain YX).